The chain runs to 163 residues: Putative 4-hydroxy-4-methyl-2-oxoglutarate aldolase (163 aa).

Residues 76-79 and Arg98 contribute to the substrate site; that span reads GDML. An a divalent metal cation-binding site is contributed by Asp99.

This sequence belongs to the class II aldolase/RraA-like family. As to quaternary structure, homotrimer. A divalent metal cation serves as cofactor.

The enzyme catalyses 4-hydroxy-4-methyl-2-oxoglutarate = 2 pyruvate. It carries out the reaction oxaloacetate + H(+) = pyruvate + CO2. Functionally, catalyzes the aldol cleavage of 4-hydroxy-4-methyl-2-oxoglutarate (HMG) into 2 molecules of pyruvate. Also contains a secondary oxaloacetate (OAA) decarboxylase activity due to the common pyruvate enolate transition state formed following C-C bond cleavage in the retro-aldol and decarboxylation reactions. The polypeptide is Putative 4-hydroxy-4-methyl-2-oxoglutarate aldolase (Pseudomonas entomophila (strain L48)).